Consider the following 102-residue polypeptide: uncharacterized protein (102 aa).

This is an uncharacterized protein from Enterobacteria phage T4 (Bacteriophage T4).